Reading from the N-terminus, the 267-residue chain is Putative F-box protein At5g38810 (267 aa).

In terms of domain architecture, F-box spans 4 to 53 (RKTFDSIPDDLFVEIALRLSSKSIARCRCVSKLWASILYRQDFTELFITK).

This chain is Putative F-box protein At5g38810, found in Arabidopsis thaliana (Mouse-ear cress).